We begin with the raw amino-acid sequence, 260 residues long: Serine protease VLSP-1 (260 aa).

The first 18 residues, 1–18, serve as a signal peptide directing secretion; sequence MVLIRVLANLLVLHLSYA. Residues 19–24 constitute a propeptide that is removed on maturation; sequence QKSSEL. Positions 25–251 constitute a Peptidase S1 domain; it reads VIGGDECNIN…YSDWIQSIIA (227 aa). Cystine bridges form between Cys31/Cys165, Cys52/Cys68, Cys100/Cys258, Cys144/Cys212, Cys176/Cys191, and Cys202/Cys227. Asn44 carries an N-linked (GlcNAc...) asparagine glycan. Residue His67 is the Charge relay system of the active site. A glycan (N-linked (GlcNAc...) asparagine) is linked at Asn103. The active-site Charge relay system is the Asp112. The N-linked (GlcNAc...) asparagine glycan is linked to Asn156. Catalysis depends on Ser206, which acts as the Charge relay system.

It belongs to the peptidase S1 family. Snake venom subfamily. In terms of tissue distribution, expressed by the venom gland.

It is found in the secreted. Snake venom serine protease that may act in the hemostasis system of the prey. The protein is Serine protease VLSP-1 of Macrovipera lebetinus (Levantine viper).